A 234-amino-acid polypeptide reads, in one-letter code: Phosphoribosylaminoimidazole-succinocarboxamide synthase (234 aa).

It belongs to the SAICAR synthetase family.

It catalyses the reaction 5-amino-1-(5-phospho-D-ribosyl)imidazole-4-carboxylate + L-aspartate + ATP = (2S)-2-[5-amino-1-(5-phospho-beta-D-ribosyl)imidazole-4-carboxamido]succinate + ADP + phosphate + 2 H(+). It participates in purine metabolism; IMP biosynthesis via de novo pathway; 5-amino-1-(5-phospho-D-ribosyl)imidazole-4-carboxamide from 5-amino-1-(5-phospho-D-ribosyl)imidazole-4-carboxylate: step 1/2. The polypeptide is Phosphoribosylaminoimidazole-succinocarboxamide synthase (Pyrococcus furiosus (strain ATCC 43587 / DSM 3638 / JCM 8422 / Vc1)).